Here is an 869-residue protein sequence, read N- to C-terminus: Speckle targeted PIP5K1A-regulated poly(A) polymerase (869 aa).

The Matrin-type zinc-finger motif lies at 16-46; it reads FRCCLCDVTTANRPSLDAHLKGRKHRDLVQL. The RRM domain occupies 56–128; the sequence is RSVFVSGFPR…HGLRVRPREQ (73 aa). The tract at residues 114-144 is disordered; that stretch reads HSLGGHGLRVRPREQKEFQSPASKSPKGVDS. Ser205 is a binding site for ATP. Positions 216 and 218 each coordinate Mg(2+). Asp216 and Asp218 together coordinate UTP. Disordered stretches follow at residues 226-247 and 259-335; these read MEET…LDSA and CTPA…ASKD. 2 stretches are compositionally biased toward polar residues: residues 266 to 276 and 283 to 299; these read DSLSPTSVQES and TPSS…LGSD. The segment covering 314 to 335 has biased composition (basic and acidic residues); it reads QEDRKEGKQGKELELAEEASKD. Asn395 is a binding site for ATP. Positions 395, 417, 435, and 552 each coordinate UTP. The PAP-associated domain maps to 494-552; sequence LSSLLAQFFSCVSCLDLSGSLLSLREGRPLMVAEGLPSDLWEGLRLGPMNLQDPFDLSH. The interval 601 to 869 is KA1; binds the bulging loops of U6 snRNA but is dispensable for terminal uridylyltransferase activity; the sequence is SSPSSLLSAK…IPQALKNLLK (269 aa). Disordered stretches follow at residues 640-689, 735-757, 775-796, and 803-822; these read QGTK…DHSE, MKPE…HPSS, ARRR…TGAE, and RVTQ…PGEP. Over residues 671–689 the composition is skewed to basic and acidic residues; sequence KSFEEGKEEPQGCAGDHSE. Residues Ser688 and Ser744 each carry the phosphoserine modification.

It belongs to the DNA polymerase type-B-like family. In terms of assembly, associates with the cleavage and polyadenylation specificity factor (CPSF) complex. Interacts with CPSF1 and CPSF3; the interaction is direct. Interacts with PIP5K1A. Requires Mg(2+) as cofactor. It depends on Mn(2+) as a cofactor. In terms of processing, phosphorylated by CK1 in the proline-rich (Pro-rich) region.

The protein localises to the nucleus. It localises to the nucleolus. The protein resides in the nucleus speckle. The enzyme catalyses RNA(n) + UTP = RNA(n)-3'-uridine ribonucleotide + diphosphate. It carries out the reaction RNA(n) + ATP = RNA(n)-3'-adenine ribonucleotide + diphosphate. Its activity is regulated as follows. Adenylyltransferase activity is specifically phosphatidylinositol 4,5-bisphosphate (PtdIns(4,5)P2). Functionally, poly(A) polymerase that creates the 3'-poly(A) tail of specific pre-mRNAs. Localizes to nuclear speckles together with PIP5K1A and mediates polyadenylation of a select set of mRNAs, such as HMOX1. In addition to polyadenylation, it is also required for the 3'-end cleavage of pre-mRNAs: binds to the 3'UTR of targeted pre-mRNAs and promotes the recruitment and assembly of the CPSF complex on the 3'UTR of pre-mRNAs. In addition to adenylyltransferase activity, also has uridylyltransferase activity. However, the ATP ratio is higher than UTP in cells, suggesting that it functions primarily as a poly(A) polymerase. Acts as a specific terminal uridylyltransferase for U6 snRNA in vitro: responsible for a controlled elongation reaction that results in the restoration of the four 3'-terminal UMP-residues found in newly transcribed U6 snRNA. Not involved in replication-dependent histone mRNA degradation. This chain is Speckle targeted PIP5K1A-regulated poly(A) polymerase (Tut1), found in Mus musculus (Mouse).